Here is a 572-residue protein sequence, read N- to C-terminus: Sulfite reductase [NADPH] hemoprotein beta-component (572 aa).

Residues C437, C443, C482, and C486 each coordinate [4Fe-4S] cluster. Siroheme is bound at residue C486.

It belongs to the nitrite and sulfite reductase 4Fe-4S domain family. As to quaternary structure, alpha(8)-beta(8). The alpha component is a flavoprotein, the beta component is a hemoprotein. It depends on siroheme as a cofactor. Requires [4Fe-4S] cluster as cofactor.

The catalysed reaction is hydrogen sulfide + 3 NADP(+) + 3 H2O = sulfite + 3 NADPH + 4 H(+). It functions in the pathway sulfur metabolism; hydrogen sulfide biosynthesis; hydrogen sulfide from sulfite (NADPH route): step 1/1. In terms of biological role, component of the sulfite reductase complex that catalyzes the 6-electron reduction of sulfite to sulfide. This is one of several activities required for the biosynthesis of L-cysteine from sulfate. This Staphylococcus epidermidis (strain ATCC 12228 / FDA PCI 1200) protein is Sulfite reductase [NADPH] hemoprotein beta-component.